The sequence spans 213 residues: Chloramphenicol acetyltransferase 2 (213 aa).

The active-site Proton acceptor is histidine 189.

This sequence belongs to the chloramphenicol acetyltransferase family. Homotrimer.

The catalysed reaction is chloramphenicol + acetyl-CoA = chloramphenicol 3-acetate + CoA. Its function is as follows. This enzyme is an effector of chloramphenicol resistance in bacteria. In Escherichia coli, this protein is Chloramphenicol acetyltransferase 2 (cmlA).